The chain runs to 214 residues: MARVKICGLTRGADLRAAIDAGADAVGVISEVPVDSPREVDPATAAELLADVPPFVTATLVTMPDSAERAVELLRTICPDAIQLHGEWTPDEIRFIRAETERKVLLAVDADDPARAEEFDRVADALVIDSTDDSGAGGTGETHDWERAGDLADRLTSPVVLAGGLTADNVAEAVRAADPFAVDVASGVELTDGRKDHNAVARFVANAGREMELA.

It belongs to the TrpF family.

It catalyses the reaction N-(5-phospho-beta-D-ribosyl)anthranilate = 1-(2-carboxyphenylamino)-1-deoxy-D-ribulose 5-phosphate. The protein operates within amino-acid biosynthesis; L-tryptophan biosynthesis; L-tryptophan from chorismate: step 3/5. The chain is N-(5'-phosphoribosyl)anthranilate isomerase from Halorubrum lacusprofundi (strain ATCC 49239 / DSM 5036 / JCM 8891 / ACAM 34).